Reading from the N-terminus, the 263-residue chain is Glucosamine-6-phosphate deaminase (263 aa).

The active-site Proton acceptor; for enolization step is D72. Residue D141 is the For ring-opening step of the active site. H143 (proton acceptor; for ring-opening step) is an active-site residue. Residue E148 is the For ring-opening step of the active site.

It belongs to the glucosamine/galactosamine-6-phosphate isomerase family. NagB subfamily.

It carries out the reaction alpha-D-glucosamine 6-phosphate + H2O = beta-D-fructose 6-phosphate + NH4(+). The protein operates within amino-sugar metabolism; N-acetylneuraminate degradation; D-fructose 6-phosphate from N-acetylneuraminate: step 5/5. Its activity is regulated as follows. Allosterically activated by N-acetylglucosamine 6-phosphate (GlcNAc6P). Functionally, catalyzes the reversible isomerization-deamination of glucosamine 6-phosphate (GlcN6P) to form fructose 6-phosphate (Fru6P) and ammonium ion. The chain is Glucosamine-6-phosphate deaminase from Porphyromonas gingivalis (strain ATCC 33277 / DSM 20709 / CIP 103683 / JCM 12257 / NCTC 11834 / 2561).